The chain runs to 808 residues: MDRQSVVKSTAIPFPLNFDNEKYDDMYKAYNKIMVLARDLNAFIETPEFVFIGKDGNGKSALIESFIGFPMMIGEGSSLRPLHITLMNNARCEEPIVTFKRDRSLDSYEFDRQIELSMVSSEISKRNQKTSIPIEITIEYRYYLNMLLIEPPSVSIQPTNAITIQGQSMTSPANQLANKIAKLSIGNEMGEMITQYTKSNNRTLVFVETSTNGGTNSSEMLELAKKLDYKLDRSIFVFNKFHSLLTGDQPFTNGRDANRFLGSPSIGAPTFFTTLPSTAQRSQCNSKDQLSQLCDQLQQTDLNILEQLQFDKKYERNVGLSAFRHWISEFTWRKYLDSVPEVLKRLNSFRTTSEDQLYQIRQQLERTNAVTLRQIANSYVSIEFIQCIEKLVTRTLEGNPSLNGQTLEEEKSQDETGDWYDHNGKPILLLNDEKLVTFYDNKLYGGQQFERLLTEFKCITEVIQLEELSISEVACAIGSNRPSNASVIAWAASDLAQKKIKEALLPLVDQLFKRATYILRRLVDIVDRMIENKKKSSFRRHGNSTSLFQDNSSPSSQSQSQSSSISQSASLSSENMIYGIQSINGSDSVSRPSHENTIVNVEDHPYFIYSVKEMYFKYVDQIAADCKNKCMDEFYTTRLIYWDLQSNKDLKKFCTDSPCVSLNNSLNNNNKSTTPGNNNNNNNNNSNNNYNNSNHILNPKETHTMVTELASKLFQDIRNRMSKNIMLKCYNYFLIPMQMDLKLNIQDNITKLSDAMLEEIFEIQTTKERLREDEQHLAQICNQFIQQEENYKKYSQSFSHPFPSAVRN.

The Dynamin-type G domain occupies Phe-43–Pro-340. Positions Gly-53 to Ser-60 are G1 motif. Gly-53 to Ser-60 is a binding site for GTP. The interval Leu-79–Arg-80 is G2 motif. The segment at Glu-150–Ser-153 is G3 motif. GTP contacts are provided by residues Glu-150–Val-154 and Asn-239–His-242. A G4 motif region spans residues Asn-239–His-242. Residues Pro-276–Ala-279 form a G5 motif region. Disordered regions lie at residues Ser-536–Ile-565 and Ser-665–His-695. Low complexity-rich tracts occupy residues Ser-552–Ile-565 and Ser-665–Asn-694.

It belongs to the TRAFAC class dynamin-like GTPase superfamily. Dynamin/Fzo/YdjA family.

It localises to the cytoplasm. The enzyme catalyses GTP + H2O = GDP + phosphate + H(+). In terms of biological role, involved in cytokinesis. May hydrolyze GTP. The polypeptide is Dynamin-like protein B (dlpB) (Dictyostelium discoideum (Social amoeba)).